A 257-amino-acid polypeptide reads, in one-letter code: 3-deoxy-manno-octulosonate cytidylyltransferase (257 aa).

This sequence belongs to the KdsB family.

The protein resides in the cytoplasm. The enzyme catalyses 3-deoxy-alpha-D-manno-oct-2-ulosonate + CTP = CMP-3-deoxy-beta-D-manno-octulosonate + diphosphate. Its pathway is nucleotide-sugar biosynthesis; CMP-3-deoxy-D-manno-octulosonate biosynthesis; CMP-3-deoxy-D-manno-octulosonate from 3-deoxy-D-manno-octulosonate and CTP: step 1/1. It participates in bacterial outer membrane biogenesis; lipopolysaccharide biosynthesis. Functionally, activates KDO (a required 8-carbon sugar) for incorporation into bacterial lipopolysaccharide in Gram-negative bacteria. The polypeptide is 3-deoxy-manno-octulosonate cytidylyltransferase (Methylobacillus flagellatus (strain ATCC 51484 / DSM 6875 / VKM B-1610 / KT)).